The sequence spans 513 residues: Cytochrome P450 4p1 (513 aa).

The heme site is built by Glu-320 and Cys-459.

The protein belongs to the cytochrome P450 family. Heme is required as a cofactor.

It localises to the endoplasmic reticulum membrane. It is found in the microsome membrane. May be involved in the metabolism of insect hormones and in the breakdown of synthetic insecticides. The chain is Cytochrome P450 4p1 (Cyp4p1) from Drosophila melanogaster (Fruit fly).